The chain runs to 286 residues: Structure-specific endonuclease subunit SLX1 (286 aa).

The 84-residue stretch at 15-98 folds into the GIY-YIG domain; that stretch reads SFYGVYILKS…QHAYQTRHIN (84 aa).

It belongs to the SLX1 family. Forms a heterodimer with SLX4. A divalent metal cation is required as a cofactor.

It is found in the nucleus. Functionally, catalytic subunit of the SLX1-SLX4 structure-specific endonuclease that resolves DNA secondary structures generated during DNA repair and recombination. Has endonuclease activity towards branched DNA substrates, introducing single-strand cuts in duplex DNA close to junctions with ss-DNA. This chain is Structure-specific endonuclease subunit SLX1, found in Candida dubliniensis (strain CD36 / ATCC MYA-646 / CBS 7987 / NCPF 3949 / NRRL Y-17841) (Yeast).